The sequence spans 943 residues: WD repeat-containing protein 3 (943 aa).

5 WD repeats span residues Ser21–Ile60, Gly63–Thr102, Gly105–Arg144, Gly147–Thr186, and Gly189–Asp228. A phosphoserine mark is found at Ser240 and Ser241. A Phosphothreonine modification is found at Thr257. Residues Glu277–Lys316 form a WD 6 repeat. The segment at Arg326–Val345 is disordered. WD repeat units lie at residues Gly413 to Thr451, Thr453 to Asp493, Ala494 to Ser533, Gln547 to Ser586, Gly589 to Phe630, Ala631 to Thr670, and Gly673 to Glu712. Glycyl lysine isopeptide (Lys-Gly) (interchain with G-Cter in SUMO2) cross-links involve residues Lys474 and Lys529. Ser726 carries the phosphoserine modification.

This sequence belongs to the WD repeat WDR3/UTP12 family. As to quaternary structure, part of the small subunit (SSU) processome, composed of more than 70 proteins and the RNA chaperone small nucleolar RNA (snoRNA) U3. Ubiquitous.

The protein resides in the nucleus. The protein localises to the nucleolus. Part of the small subunit (SSU) processome, first precursor of the small eukaryotic ribosomal subunit. During the assembly of the SSU processome in the nucleolus, many ribosome biogenesis factors, an RNA chaperone and ribosomal proteins associate with the nascent pre-rRNA and work in concert to generate RNA folding, modifications, rearrangements and cleavage as well as targeted degradation of pre-ribosomal RNA by the RNA exosome. The sequence is that of WD repeat-containing protein 3 from Homo sapiens (Human).